The chain runs to 1657 residues: Alsin (1657 aa).

RCC1 repeat units follow at residues 60 to 109, 110 to 168, and 169 to 219; these read GEVY…VTDN, GVAY…LSIS, and REIW…LVQC. The tract at residues 432-481 is disordered; that stretch reads TGAQAGSSAIGPEGLKDSREEQVKQESMQGKKSSSLVDIREEETEGGSRR. The segment covering 445–455 has biased composition (basic and acidic residues); it reads GLKDSREEQVK. Over residues 456-467 the composition is skewed to polar residues; that stretch reads QESMQGKKSSSL. 4 positions are modified to phosphoserine: Ser465, Ser466, Ser483, and Ser492. Residue Thr510 is modified to Phosphothreonine. RCC1 repeat units follow at residues 526-577 and 578-628; these read TEVW…LTAK and SQVY…LVDT. Lys533 is subject to N6-acetyllysine. Residues 690–885 form the DH domain; sequence GYIASLHELA…ECLALHLGRK (196 aa). Residues 901-1007 form the PH domain; it reads GKMTDSLRKP…RAISQAVDQA (107 aa). 8 MORN repeats span residues 1049-1071, 1072-1094, 1100-1122, 1123-1145, 1151-1173, 1175-1197, 1198-1220, and 1221-1244; these read YDGR…DGKM, YSGM…NKAM, YVGH…SGEV, FEGC…KLTS, FIGQ…TRGE, YMGM…FGLY, YEGN…DDTI, and YEGE…NGDY. A Phosphoserine modification is found at Ser1335. Residues 1513 to 1657 form the VPS9 domain; it reads KQPDIALLGF…YYQIQREKLN (145 aa).

Forms a heteromeric complex with ALS2CL. Interacts with ALS2CL.

Functionally, may act as a GTPase regulator. Controls survival and growth of spinal motoneurons. The protein is Alsin (ALS2) of Pan troglodytes (Chimpanzee).